Here is a 296-residue protein sequence, read N- to C-terminus: Ribose import binding protein RbsB (296 aa).

An N-terminal signal peptide occupies residues 1–25 (MNMKKLATLVSAVALSATVSANAMA).

The protein belongs to the bacterial solute-binding protein 2 family. The complex is composed of an ATP-binding protein (RbsA), two transmembrane proteins (RbsC) and a solute-binding protein (RbsB).

The protein resides in the periplasm. Its function is as follows. Part of the ABC transporter complex RbsABC involved in ribose import. Binds ribose. The polypeptide is Ribose import binding protein RbsB (rbsB) (Salmonella typhi).